A 430-amino-acid chain; its full sequence is RPM1 interacting protein 13 (430 aa).

Residues 1-21 (MGSGNHVDIVDVSSGEEDVDT) form a disordered region. The segment at 231–300 (RHRIRQPIPH…QVSQSSHHSS (70 aa)) is nuclear localization.

As to quaternary structure, interacts with RPM1 (via its NB-ARC domain). Binds to ARF1 in the nucleus.

It is found in the nucleus. Its function is as follows. Resistance protein interactor which positively enhances RPM1-mediated resistance to necrotrophic bacterial pathogens Pseudomonas syringae pv. tomato DC3000 harboring type III effector protein AvrRpm1 or AvrB, but prevents the hypersensitive response (HR) controlled by RPM1. Together with ARF1, promotes leaf senescence and cell death, probably by facilitating the translocation of ARF1 into the nucleus, and activates ROS-related enzymes (e.g. POD, CAT and SOD). In Arabidopsis thaliana (Mouse-ear cress), this protein is RPM1 interacting protein 13.